A 75-amino-acid polypeptide reads, in one-letter code: Putative UPF0377 protein YAL067W-A (75 aa).

This sequence belongs to the UPF0377 family.

The protein is Putative UPF0377 protein YAL067W-A of Saccharomyces cerevisiae (strain ATCC 204508 / S288c) (Baker's yeast).